The following is a 535-amino-acid chain: Succinate-semialdehyde dehydrogenase, mitochondrial (535 aa).

The N-terminal 47 residues, M1–Y47, are a transit peptide targeting the mitochondrion. K126 is modified (N6-acetyllysine; alternate). An N6-succinyllysine; alternate modification is found at K126. K135 and K184 each carry N6-succinyllysine. T202–W204 serves as a coordination point for NAD(+). Residue R213 coordinates substrate. NAD(+) is bound at residue K228–E231. K265 is subject to N6-acetyllysine; alternate. K265 bears the N6-succinyllysine; alternate mark. NAD(+) is bound by residues G284–G289 and E306. The active-site Proton acceptor is E306. R334 contacts substrate. The Nucleophile role is filled by C340. C340 and C342 form a disulfide bridge. K365 is subject to N6-acetyllysine. K402 is modified (N6-succinyllysine). K411 bears the N6-acetyllysine mark. E438–F440 serves as a coordination point for NAD(+). S498 is a substrate binding site. S499 carries the post-translational modification Phosphoserine.

Belongs to the aldehyde dehydrogenase family. In terms of assembly, homotetramer. In terms of tissue distribution, brain, pancreas, heart, liver, skeletal muscle and kidney. Lower in placenta.

It is found in the mitochondrion. It catalyses the reaction succinate semialdehyde + NAD(+) + H2O = succinate + NADH + 2 H(+). It functions in the pathway amino-acid degradation; 4-aminobutanoate degradation. Redox-regulated. Inhibited under oxydizing conditions. Inhibited by hydrogen peroxide H(2)O(2). Functionally, catalyzes one step in the degradation of the inhibitory neurotransmitter gamma-aminobutyric acid (GABA). The protein is Succinate-semialdehyde dehydrogenase, mitochondrial of Homo sapiens (Human).